The following is a 201-amino-acid chain: Glutathione peroxidase 1 (201 aa).

The residue at position 32 (Ser-32) is a Phosphoserine. Sec-47 is a catalytic residue. Residue Sec-47 is a non-standard amino acid, selenocysteine. N6-acetyllysine; alternate occurs at positions 86, 112, and 146. 3 positions are modified to N6-succinyllysine; alternate: Lys-86, Lys-112, and Lys-146. 2 positions are modified to phosphoserine: Ser-195 and Ser-199.

Belongs to the glutathione peroxidase family. As to quaternary structure, homotetramer. Interacts with MIEN1. During periods of oxidative stress, Sec-47 may react with a superoxide radical, irreversibly lose hydroselenide and be converted to dehydroalanine.

Its subcellular location is the cytoplasm. It is found in the mitochondrion. The enzyme catalyses 2 glutathione + H2O2 = glutathione disulfide + 2 H2O. The catalysed reaction is a hydroperoxy polyunsaturated fatty acid + 2 glutathione = a hydroxy polyunsaturated fatty acid + glutathione disulfide + H2O. It carries out the reaction tert-butyl hydroperoxide + 2 glutathione = tert-butanol + glutathione disulfide + H2O. It catalyses the reaction cumene hydroperoxide + 2 glutathione = 2-phenylpropan-2-ol + glutathione disulfide + H2O. The enzyme catalyses (13S)-hydroperoxy-(9Z,11E)-octadecadienoate + 2 glutathione = (13S)-hydroxy-(9Z,11E)-octadecadienoate + glutathione disulfide + H2O. The catalysed reaction is (9S)-hydroperoxy-(10E,12Z)-octadecadienoate + 2 glutathione = (9S)-hydroxy-(10E,12Z)-octadecadienoate + glutathione disulfide + H2O. It carries out the reaction (5S)-hydroperoxy-(6E,8Z,11Z,14Z)-eicosatetraenoate + 2 glutathione = (5S)-hydroxy-(6E,8Z,11Z,14Z)-eicosatetraenoate + glutathione disulfide + H2O. It catalyses the reaction (12S)-hydroperoxy-(5Z,8Z,10E,14Z)-eicosatetraenoate + 2 glutathione = (12S)-hydroxy-(5Z,8Z,10E,14Z)-eicosatetraenoate + glutathione disulfide + H2O. The enzyme catalyses (12R)-hydroperoxy-(5Z,8Z,10E,14Z)-eicosatetraenoate + 2 glutathione = (12R)-hydroxy-(5Z,8Z,10E,14Z)-eicosatetraenoate + glutathione disulfide + H2O. The catalysed reaction is (15S)-hydroperoxy-(5Z,8Z,11Z,13E)-eicosatetraenoate + 2 glutathione = (15S)-hydroxy-(5Z,8Z,11Z,13E)-eicosatetraenoate + glutathione disulfide + H2O. It carries out the reaction (5S)-hydroperoxy-(6E,8Z,11Z,14Z,17Z)-eicosapentaenoate + 2 glutathione = (5S)-hydroxy-(6E,8Z,11Z,14Z,17Z)-eicosapentaenoate + glutathione disulfide + H2O. It catalyses the reaction (12S)-hydroperoxy-(5Z,8Z,10E,14Z,17Z)-eicosapentaenoate + 2 glutathione = (12S)-hydroxy-(5Z,8Z,10E,14Z,17Z)-eicosapentaenoate + glutathione disulfide + H2O. The enzyme catalyses (15S)-hydroperoxy-(5Z,8Z,11Z,13E,17Z)-eicosapentaenoate + 2 glutathione = (15S)-hydroxy-(5Z,8Z,11Z,13E,17Z)-eicosapentaenoate + glutathione disulfide + H2O. The catalysed reaction is (15S)-hydroperoxy-(11Z,13E)-eicosadienoate + 2 glutathione = (15S)-hydroxy-(11Z,13E)-eicosadienoate + glutathione disulfide + H2O. It carries out the reaction (17S)-hydroperoxy-(4Z,7Z,10Z,13Z,15E,19Z)-docosahexaenoate + 2 glutathione = (17S)-hydroxy-(4Z,7Z,10Z,13Z,15E,19Z)-docosahexaenoate + glutathione disulfide + H2O. Functionally, catalyzes the reduction of hydroperoxides in a glutathione-dependent manner thus regulating cellular redox homeostasis. Can reduce small soluble hydroperoxides such as H2O2, cumene hydroperoxide and tert-butyl hydroperoxide, as well as several fatty acid-derived hydroperoxides. In platelets catalyzes the reduction of 12-hydroperoxyeicosatetraenoic acid, the primary product of the arachidonate 12-lipoxygenase pathway. This is Glutathione peroxidase 1 (GPX1) from Callithrix jacchus (White-tufted-ear marmoset).